A 123-amino-acid chain; its full sequence is Small ribosomal subunit protein uS13 (123 aa).

The segment at 97–123 (PVRGQRTHTNAKTRKGRSKLPVAAKKK) is disordered.

This sequence belongs to the universal ribosomal protein uS13 family. As to quaternary structure, part of the 30S ribosomal subunit. Forms a loose heterodimer with protein S19. Forms two bridges to the 50S subunit in the 70S ribosome.

Its function is as follows. Located at the top of the head of the 30S subunit, it contacts several helices of the 16S rRNA. In the 70S ribosome it contacts the 23S rRNA (bridge B1a) and protein L5 of the 50S subunit (bridge B1b), connecting the 2 subunits; these bridges are implicated in subunit movement. Contacts the tRNAs in the A and P-sites. This Ehrlichia canis (strain Jake) protein is Small ribosomal subunit protein uS13.